We begin with the raw amino-acid sequence, 347 residues long: UDP-3-O-acylglucosamine N-acyltransferase (347 aa).

H242 functions as the Proton acceptor in the catalytic mechanism.

This sequence belongs to the transferase hexapeptide repeat family. LpxD subfamily. As to quaternary structure, homotrimer.

The enzyme catalyses a UDP-3-O-[(3R)-3-hydroxyacyl]-alpha-D-glucosamine + a (3R)-hydroxyacyl-[ACP] = a UDP-2-N,3-O-bis[(3R)-3-hydroxyacyl]-alpha-D-glucosamine + holo-[ACP] + H(+). It functions in the pathway bacterial outer membrane biogenesis; LPS lipid A biosynthesis. Its function is as follows. Catalyzes the N-acylation of UDP-3-O-acylglucosamine using 3-hydroxyacyl-ACP as the acyl donor. Is involved in the biosynthesis of lipid A, a phosphorylated glycolipid that anchors the lipopolysaccharide to the outer membrane of the cell. The polypeptide is UDP-3-O-acylglucosamine N-acyltransferase (Dechloromonas aromatica (strain RCB)).